Reading from the N-terminus, the 203-residue chain is Urease accessory protein UreG (203 aa).

Gly-14–Thr-21 provides a ligand contact to GTP.

Belongs to the SIMIBI class G3E GTPase family. UreG subfamily. As to quaternary structure, homodimer. UreD, UreF and UreG form a complex that acts as a GTP-hydrolysis-dependent molecular chaperone, activating the urease apoprotein by helping to assemble the nickel containing metallocenter of UreC. The UreE protein probably delivers the nickel.

The protein localises to the cytoplasm. In terms of biological role, facilitates the functional incorporation of the urease nickel metallocenter. This process requires GTP hydrolysis, probably effectuated by UreG. The polypeptide is Urease accessory protein UreG (Rhizobium meliloti (strain 1021) (Ensifer meliloti)).